The following is a 209-amino-acid chain: Large ribosomal subunit protein uL3 (209 aa).

The tract at residues 133–152 is disordered; sequence THGNSLSHRVPGSIGQNQTP. At Q150 the chain carries N5-methylglutamine.

Belongs to the universal ribosomal protein uL3 family. In terms of assembly, part of the 50S ribosomal subunit. Forms a cluster with proteins L14 and L19. In terms of processing, methylated by PrmB.

Functionally, one of the primary rRNA binding proteins, it binds directly near the 3'-end of the 23S rRNA, where it nucleates assembly of the 50S subunit. This Yersinia pseudotuberculosis serotype O:1b (strain IP 31758) protein is Large ribosomal subunit protein uL3.